A 199-amino-acid polypeptide reads, in one-letter code: MMRGSTEIDMPESSSVSKGTAPLIAAPMKEKGGYKKGIAIFDFILRLAAIATALAAAASMGTSDETLPFFTQFFQFQASYDDLPTFQFFVIAMAIVAGYLVLSLPFSIVAIVRPHAAGPRLLLIILDTVALTLNTAAGAAAAAIVYLAHNGNSSTNWLAICQQFGDFCQKNSGAVVASFITVVIFVFLLVLSAFALRRH.

The Cytoplasmic portion of the chain corresponds to 1-37; the sequence is MMRGSTEIDMPESSSVSKGTAPLIAAPMKEKGGYKKG. A helical membrane pass occupies residues 38–58; it reads IAIFDFILRLAAIATALAAAA. The Extracellular segment spans residues 59-87; that stretch reads SMGTSDETLPFFTQFFQFQASYDDLPTFQ. Residues 88-108 traverse the membrane as a helical segment; it reads FFVIAMAIVAGYLVLSLPFSI. The Cytoplasmic portion of the chain corresponds to 109–120; it reads VAIVRPHAAGPR. Residues 121–141 form a helical membrane-spanning segment; sequence LLLIILDTVALTLNTAAGAAA. Residues 142–173 are Extracellular-facing; that stretch reads AAIVYLAHNGNSSTNWLAICQQFGDFCQKNSG. An N-linked (GlcNAc...) asparagine glycan is attached at N152. The chain crosses the membrane as a helical span at residues 174–194; sequence AVVASFITVVIFVFLLVLSAF. At 195–199 the chain is on the cytoplasmic side; sequence ALRRH.

The protein belongs to the Casparian strip membrane proteins (CASP) family. In terms of assembly, homodimer and heterodimers.

The protein localises to the cell membrane. In terms of biological role, regulates membrane-cell wall junctions and localized cell wall deposition. Required for establishment of the Casparian strip membrane domain (CSD) and the subsequent formation of Casparian strips, a cell wall modification of the root endodermis that determines an apoplastic barrier between the intraorganismal apoplasm and the extraorganismal apoplasm and prevents lateral diffusion. This chain is Casparian strip membrane protein 2, found in Populus trichocarpa (Western balsam poplar).